The chain runs to 903 residues: Ras and Rab interactor 2 (903 aa).

The tract at residues 44-73 (NGLEPSETHSMVRHKDGGYSEDKDGKTCPR) is disordered. A compositionally biased stretch (basic and acidic residues) spans 56-73 (RHKDGGYSEDKDGKTCPR). In terms of domain architecture, SH2 spans 97–190 (WLQLSLSEEE…VLPFTLKLPY (94 aa)). Disordered regions lie at residues 282-455 (QDLS…EFDR) and 471-491 (EDYEGESDQETMAPPIKSKKK). Positions 306 to 315 (SPPPRPPPPA) are enriched in pro residues. Residues 318-338 (SLHTSPGLSRTEPQTSMPETV) show a composition bias toward polar residues. Serine 366 is modified (phosphoserine). Over residues 419–431 (APPPGSESQPPPC) the composition is skewed to pro residues. A compositionally biased stretch (low complexity) spans 439-450 (SDMSLSTSSSDS). The tract at residues 506-775 (LRKMSGVFSS…ARLLSSEARD (270 aa)) is interaction with RAB5B. Position 510 is a phosphoserine (serine 510). Threonine 518 bears the Phosphothreonine mark. One can recognise a VPS9 domain in the interval 627–766 (DGSWKQLKEN…IKNFQEEQAA (140 aa)). Positions 796–887 (FQNYLRVAFQ…FHFVYKRIKS (92 aa)) constitute a Ras-associating domain.

This sequence belongs to the RIN (Ras interaction/interference) family. Homotetramer; probably composed of anti-parallel linkage of two parallel dimers. Interacts with Ras. Interacts with RAB5B, with a much higher affinity for GTP-bound activated RAB5B. Does not interact with other members of the Rab family.

It localises to the cytoplasm. Ras effector protein. May function as an upstream activator and/or downstream effector for RAB5B in endocytic pathway. May function as a guanine nucleotide exchange (GEF) of RAB5B, required for activating the RAB5 proteins by exchanging bound GDP for free GTP. The chain is Ras and Rab interactor 2 (Rin2) from Mus musculus (Mouse).